A 216-amino-acid polypeptide reads, in one-letter code: Thiopurine S-methyltransferase (216 aa).

S-adenosyl-L-methionine-binding residues include tryptophan 10, leucine 45, glutamate 66, and arginine 123.

It belongs to the class I-like SAM-binding methyltransferase superfamily. TPMT family.

The protein localises to the cytoplasm. It carries out the reaction S-adenosyl-L-methionine + a thiopurine = S-adenosyl-L-homocysteine + a thiopurine S-methylether.. This is Thiopurine S-methyltransferase from Pseudomonas putida (strain ATCC 47054 / DSM 6125 / CFBP 8728 / NCIMB 11950 / KT2440).